The chain runs to 984 residues: Probable beta-galactosidase C (984 aa).

An N-terminal signal peptide occupies residues Met-1–Ala-23. Substrate contacts are provided by Tyr-82, Asn-127, Ala-128, Glu-129, and Asn-187. The active-site Proton donor is Glu-188. The N-linked (GlcNAc...) asparagine glycan is linked to Asn-197. Tyr-251 lines the substrate pocket. An intrachain disulfide couples Cys-257 to Cys-304. N-linked (GlcNAc...) asparagine glycosylation occurs at Asn-276. The active-site Nucleophile is Glu-287. Tyr-353 is a substrate binding site. Asn-391, Asn-421, Asn-434, Asn-517, Asn-602, Asn-677, Asn-715, Asn-720, Asn-759, and Asn-805 each carry an N-linked (GlcNAc...) asparagine glycan.

Belongs to the glycosyl hydrolase 35 family.

The protein resides in the secreted. It catalyses the reaction Hydrolysis of terminal non-reducing beta-D-galactose residues in beta-D-galactosides.. Cleaves beta-linked terminal galactosyl residues from gangliosides, glycoproteins, and glycosaminoglycans. The protein is Probable beta-galactosidase C (lacC) of Aspergillus oryzae (strain ATCC 42149 / RIB 40) (Yellow koji mold).